A 558-amino-acid chain; its full sequence is Alkaline/neutral invertase CINV2 (558 aa).

3 positions are modified to phosphoserine: serine 16, serine 19, and serine 50. Threonine 79 carries the post-translational modification Phosphothreonine. Position 555 is a phosphoserine (serine 555).

Belongs to the glycosyl hydrolase 100 family.

The protein resides in the cytoplasm. Its subcellular location is the cytosol. The catalysed reaction is Hydrolysis of terminal non-reducing beta-D-fructofuranoside residues in beta-D-fructofuranosides.. Functionally, cytosolic invertase that may cleave sucrose into glucose and fructose, and that is involved in the regulation of root growth. May regulate sugar-mediated root development by controlling sucrose catabolism in root cells. The polypeptide is Alkaline/neutral invertase CINV2 (Arabidopsis thaliana (Mouse-ear cress)).